Reading from the N-terminus, the 136-residue chain is Translation initiation factor 5A (136 aa).

A Hypusine modification is found at K36.

This sequence belongs to the eIF-5A family.

It is found in the cytoplasm. Functionally, functions by promoting the formation of the first peptide bond. This is Translation initiation factor 5A (eIF5A) from Hyperthermus butylicus (strain DSM 5456 / JCM 9403 / PLM1-5).